The sequence spans 570 residues: Protein NRT1/ PTR FAMILY 8.1 (570 aa).

Position 98 is a phosphothreonine (Thr-98). 10 helical membrane-spanning segments follow: residues 99-119, 140-160, 182-202, 210-230, 329-349, 377-397, 414-434, 454-474, 494-514, and 537-557; these read IATFVFIYVSGMTLLTLSASV, AVFFVALYMIALGTGGIKPCV, FFNWFYFSINVGALIAATVLV, WGWGFGVPTVAMVIAVCFFFF, IITLLPVWATGIVFATVYSQM, LFDTVSVLFWTPVYDQFIIPL, MGIGLVVSIFAMITAGVLEVV, IFWQIPQYLLIGCAEVFTFIG, LSLTTVALGNYLSTVLVTVVM, and YFFYLLATLSFLNFLVYLWIS.

It belongs to the major facilitator superfamily. Proton-dependent oligopeptide transporter (POT/PTR) (TC 2.A.17) family. In terms of tissue distribution, expressed in cotyledons, hypocotyls, leaves, roots, flowers, pistils and vascular tissue of sepals, anthers, carpels and funiculi. Not detected in seeds.

The protein resides in the cell membrane. Functionally, peptide transporter. Mediates the transport of di- and tripeptides. High affinity transporter with low selectivity. No transport of amino acids. The protein is Protein NRT1/ PTR FAMILY 8.1 (NPF8.1) of Arabidopsis thaliana (Mouse-ear cress).